A 272-amino-acid chain; its full sequence is Putative MgpC-like protein MPN_366 (272 aa).

2 disordered regions span residues 65-84 and 171-196; these read QESQ…TSGS and GSGQ…PMPS. Residues 72–84 show a composition bias toward low complexity; that stretch reads NGSQSGSSDTSGS. The span at 173 to 187 shows a compositional bias: polar residues; that stretch reads GQESSWNSQRSQKGL.

This sequence belongs to the MgpC family.

The chain is Putative MgpC-like protein MPN_366 from Mycoplasma pneumoniae (strain ATCC 29342 / M129 / Subtype 1) (Mycoplasmoides pneumoniae).